The sequence spans 234 residues: Orotidine 5'-phosphate decarboxylase (234 aa).

Residues Asp-10, Lys-32, 59–68 (DLKLHDIPTT), Thr-122, Arg-184, Gln-193, Gly-213, and Arg-214 contribute to the substrate site. The Proton donor role is filled by Lys-61.

Belongs to the OMP decarboxylase family. Type 1 subfamily. In terms of assembly, homodimer.

It carries out the reaction orotidine 5'-phosphate + H(+) = UMP + CO2. It participates in pyrimidine metabolism; UMP biosynthesis via de novo pathway; UMP from orotate: step 2/2. In terms of biological role, catalyzes the decarboxylation of orotidine 5'-monophosphate (OMP) to uridine 5'-monophosphate (UMP). This is Orotidine 5'-phosphate decarboxylase from Bacillus pumilus (strain SAFR-032).